A 138-amino-acid polypeptide reads, in one-letter code: Large ribosomal subunit protein uL29 (138 aa).

Residues 1-79 (MAKSKMLDLR…TNKVIKADYN (79 aa)) form a large ribosomal subunit protein uL29 region. A unknown region spans residues 80–138 (KAVEEAEKAGKEVRAKQRKFLEEQYGQQSQTKVNEADIQKAMQAAEQETVEPDTKGETK). Positions 103 to 138 (QYGQQSQTKVNEADIQKAMQAAEQETVEPDTKGETK) are disordered.

Belongs to the universal ribosomal protein uL29 family.

The polypeptide is Large ribosomal subunit protein uL29 (Mycoplasma capricolum subsp. capricolum (strain California kid / ATCC 27343 / NCTC 10154)).